A 343-amino-acid polypeptide reads, in one-letter code: Anthranilate phosphoribosyltransferase (343 aa).

Residues glycine 84, glycine 87 to aspartate 88, threonine 92, asparagine 94 to threonine 97, lysine 112 to serine 120, and serine 124 contribute to the 5-phospho-alpha-D-ribose 1-diphosphate site. Glycine 84 is an anthranilate binding site. Serine 96 is a binding site for Mg(2+). Asparagine 115 is an anthranilate binding site. Arginine 170 lines the anthranilate pocket. Mg(2+)-binding residues include aspartate 229 and glutamate 230.

The protein belongs to the anthranilate phosphoribosyltransferase family. Homodimer. Mg(2+) is required as a cofactor.

The catalysed reaction is N-(5-phospho-beta-D-ribosyl)anthranilate + diphosphate = 5-phospho-alpha-D-ribose 1-diphosphate + anthranilate. Its pathway is amino-acid biosynthesis; L-tryptophan biosynthesis; L-tryptophan from chorismate: step 2/5. Its function is as follows. Catalyzes the transfer of the phosphoribosyl group of 5-phosphorylribose-1-pyrophosphate (PRPP) to anthranilate to yield N-(5'-phosphoribosyl)-anthranilate (PRA). This is Anthranilate phosphoribosyltransferase from Bordetella avium (strain 197N).